Consider the following 188-residue polypeptide: Urease accessory protein UreE (188 aa).

The disordered stretch occupies residues 142–174 (AYQSQAGAGHHHHHDHDHGHSHDHSHTHSHADS). Basic and acidic residues predominate over residues 157–172 (HDHGHSHDHSHTHSHA).

It belongs to the UreE family.

It localises to the cytoplasm. Functionally, involved in urease metallocenter assembly. Binds nickel. Probably functions as a nickel donor during metallocenter assembly. This chain is Urease accessory protein UreE, found in Tolumonas auensis (strain DSM 9187 / NBRC 110442 / TA 4).